Reading from the N-terminus, the 72-residue chain is Bowman-Birk type trypsin inhibitor (72 aa).

Cystine bridges form between Cys-12–Cys-66, Cys-13–Cys-28, Cys-16–Cys-62, Cys-18–Cys-26, Cys-36–Cys-43, Cys-40–Cys-55, and Cys-45–Cys-53.

This sequence belongs to the Bowman-Birk serine protease inhibitor family.

In Vigna radiata var. radiata (Mung bean), this protein is Bowman-Birk type trypsin inhibitor.